A 177-amino-acid chain; its full sequence is Prorelaxin (177 aa).

Residues 1-25 (MLRWFLSHLLGVWLLLSQLPREIPA) form the signal peptide. 3 disulfides stabilise this stretch: Cys-34/Cys-164, Cys-46/Cys-177, and Cys-163/Cys-168. Residues 63–149 (QISEPLAEVV…KSLSKLDKHP (87 aa)) constitute a propeptide, connecting peptide.

The protein belongs to the insulin family. Heterodimer of a B chain and an A chain linked by two disulfide bonds. Placenta; syncytiotrophoblast.

It localises to the secreted. Relaxin is an ovarian hormone that acts with estrogen to produce dilatation of the birth canal in many mammals. In Canis lupus familiaris (Dog), this protein is Prorelaxin (RLN).